We begin with the raw amino-acid sequence, 375 residues long: Succinyl-diaminopimelate desuccinylase (375 aa).

A Zn(2+)-binding site is contributed by H66. D68 is an active-site residue. Residue D99 coordinates Zn(2+). E133 serves as the catalytic Proton acceptor. Zn(2+)-binding residues include E134, E162, and H348.

Belongs to the peptidase M20A family. DapE subfamily. Homodimer. The cofactor is Zn(2+). It depends on Co(2+) as a cofactor.

The catalysed reaction is N-succinyl-(2S,6S)-2,6-diaminopimelate + H2O = (2S,6S)-2,6-diaminopimelate + succinate. It participates in amino-acid biosynthesis; L-lysine biosynthesis via DAP pathway; LL-2,6-diaminopimelate from (S)-tetrahydrodipicolinate (succinylase route): step 3/3. Its function is as follows. Catalyzes the hydrolysis of N-succinyl-L,L-diaminopimelic acid (SDAP), forming succinate and LL-2,6-diaminopimelate (DAP), an intermediate involved in the bacterial biosynthesis of lysine and meso-diaminopimelic acid, an essential component of bacterial cell walls. In Escherichia coli O6:K15:H31 (strain 536 / UPEC), this protein is Succinyl-diaminopimelate desuccinylase.